Consider the following 126-residue polypeptide: Small ribosomal subunit protein bS6 (126 aa).

The tract at residues proline 99–serine 126 is disordered. Positions proline 107–threonine 120 are enriched in low complexity.

The protein belongs to the bacterial ribosomal protein bS6 family.

In terms of biological role, binds together with bS18 to 16S ribosomal RNA. The polypeptide is Small ribosomal subunit protein bS6 (Synechococcus sp. (strain CC9902)).